Consider the following 99-residue polypeptide: Large ribosomal subunit protein bL27 (99 aa).

The propeptide occupies 1–10 (MKLIFDIQLF).

It belongs to the bacterial ribosomal protein bL27 family. Post-translationally, the N-terminus is cleaved by ribosomal processing cysteine protease Prp.

In Caldicellulosiruptor saccharolyticus (strain ATCC 43494 / DSM 8903 / Tp8T 6331), this protein is Large ribosomal subunit protein bL27.